Here is a 79-residue protein sequence, read N- to C-terminus: CDC42 small effector protein 1-A (79 aa).

2 S-palmitoyl cysteine lipidation sites follow: cysteine 10 and cysteine 11. The CRIB domain occupies 30-43; the sequence is IGEPMNFVHLTHVG.

It belongs to the CDC42SE/SPEC family.

The protein resides in the cytoplasm. Its subcellular location is the cytoskeleton. It is found in the cell membrane. Its function is as follows. Probably involved in the organization of the actin cytoskeleton by acting downstream of CDC42, inducing actin filament assembly. This chain is CDC42 small effector protein 1-A (cdc42se1-a), found in Xenopus laevis (African clawed frog).